Consider the following 250-residue polypeptide: MRVDLNCDLGEAFGNYFFGGDHQIIPLITSANVACGFHAGDENVMNETVKLAKAHNVAVGAHPGLPDLKGFGRRNIDISNEEIYNLMIYQLGALQGFCRIHQVKINHVKPHGALYQMGAKDREIASVIAQAVYDFDPSLVLVGLANSYLISEAKNVGLITASEVFADRRYEDDGQLVSRKESDAVITDTDEALKQVLKMVKENKVISKNNKEVTLQADTICVHGDGEHALLFVSKIREILMKEGIDIQSL.

Belongs to the LamB/PxpA family. Forms a complex composed of PxpA, PxpB and PxpC.

The enzyme catalyses 5-oxo-L-proline + ATP + 2 H2O = L-glutamate + ADP + phosphate + H(+). Its function is as follows. Catalyzes the cleavage of 5-oxoproline to form L-glutamate coupled to the hydrolysis of ATP to ADP and inorganic phosphate. The polypeptide is 5-oxoprolinase subunit A (Staphylococcus aureus (strain MRSA252)).